Consider the following 370-residue polypeptide: MDLFGDLPEPERSPRPAAGSGGPLLFDDLPPASSGDSGSLDTSLSEEVKNEGKGAKRKASDEEKNGSEELVEKKVCKASSVIFSLKGYVAERKGEREEMQDAHVILNDITAECQPPSALVTRVSYFAVFDGHGGIRASKFAAQNLHQNLIRKFPKGDGISVEKTVKRCLLDTFKHTDEEFLKQASSQKPAWKDGSTATCVLAVDNTLYIANLGDSRAILCRYNEESQKHAALSLSKEHNPTQYEERMRIQKAGGNVRDGRVLGVLEVSRSIGDGQYKRCGVTSVPDIRRCQLTPNDRFILLACDGLFKVFTPEEAVNFILSCLEDEKIQRREGKPTVDARYEAACNRLANKAVQRGSADNVTVMVVRIGL.

Residue methionine 1 is modified to N-acetylmethionine. The disordered stretch occupies residues 1–69 (MDLFGDLPEP…SDEEKNGSEE (69 aa)). Serine 13 bears the Phosphoserine mark. Residues 33–45 (SSGDSGSLDTSLS) are compositionally biased toward low complexity. The span at 46 to 69 (EEVKNEGKGAKRKASDEEKNGSEE) shows a compositional bias: basic and acidic residues. The PPM-type phosphatase domain maps to 86-368 (KGYVAERKGE…DNVTVMVVRI (283 aa)). Aspartate 130 and glycine 131 together coordinate Mn(2+). Lysine 188 is modified (N6-acetyllysine). Mn(2+) contacts are provided by aspartate 304 and aspartate 359.

This sequence belongs to the PP2C family. In terms of assembly, interacts with ILK. It depends on Mg(2+) as a cofactor. The cofactor is Mn(2+).

It localises to the cytoplasm. The catalysed reaction is O-phospho-L-seryl-[protein] + H2O = L-seryl-[protein] + phosphate. It carries out the reaction O-phospho-L-threonyl-[protein] + H2O = L-threonyl-[protein] + phosphate. Its function is as follows. Protein phosphatase that may play a role in regulation of cell cycle progression via dephosphorylation of its substrates whose appropriate phosphorylation states might be crucial for cell proliferation. Selectively associates with integrin linked kinase (ILK), to modulate cell adhesion and growth factor signaling. Inhibits the ILK-GSK3B signaling axis and may play an important role in inhibiting oncogenic transformation. The chain is Integrin-linked kinase-associated serine/threonine phosphatase 2C (ILKAP) from Bos taurus (Bovine).